We begin with the raw amino-acid sequence, 1707 residues long: Mediator of DNA damage checkpoint protein 1 (1707 aa).

Residues 1–23 (MESTQVIDWDAEEEEETELSSGS) are disordered. Residues 1–150 (MESTQVIDWD…PRSLLTIEKT (150 aa)) form an interaction with CHEK2 region. The interval 2-222 (ESTQVIDWDA…SSPFGLGSDT (221 aa)) is interaction with the MRN complex. Position 4 is a phosphothreonine (T4). Positions 9-18 (WDAEEEEETE) are enriched in acidic residues. The FHA domain occupies 54–105 (NVVGRSPDCSVALPFPSISKQHAVIEISAWNKAPILQDCGSLNGTQIVKPPR). The residue at position 146 (T146) is a Phosphothreonine. The disordered stretch occupies residues 166 to 328 (ADSEEEGDFP…EERIPVTPPV (163 aa)). Phosphoserine is present on residues S168 and S176. The span at 183-192 (GQRNTASPSA) shows a compositional bias: polar residues. S198 and S220 each carry phosphoserine. At T222 the chain carries Phosphothreonine. Over residues 252-263 (ANGTTAGIQAQP) the composition is skewed to polar residues. The segment covering 264–278 (TEHKLKDTKVKKEAG) has biased composition (basic and acidic residues). S298 bears the Phosphoserine mark. T300 carries the phosphothreonine modification. S313 is modified (phosphoserine). T315 carries the post-translational modification Phosphothreonine. S360 is modified (phosphoserine). T362 carries the post-translational modification Phosphothreonine. Positions 369–378 (ALDVPLERNH) are enriched in basic and acidic residues. Residues 369–398 (ALDVPLERNHTPMVINSDTDEEEEEEEEVS) form a disordered region. S385 carries the post-translational modification Phosphoserine. Over residues 386-397 (DTDEEEEEEEEV) the composition is skewed to acidic residues. Residue T387 is modified to Phosphothreonine. S398, S415, S425, S438, and S442 each carry phosphoserine. Disordered regions lie at residues 417–497 (DPGA…PGSH), 520–642 (PGPS…AKEC), 679–699 (LFPC…QTPG), and 718–746 (REQS…HQHL). Positions 425–439 (SQPQVLVEQSQSASG) are enriched in polar residues. A Phosphothreonine modification is found at T444. S461 carries the phosphoserine modification. The residue at position 470 (T470) is a Phosphothreonine. Phosphoserine is present on residues S492, S493, S591, S593, and S595. Residues 580–595 (VSEQESTLEVRSQSGS) show a composition bias toward polar residues. Residues 626 to 642 (GREREAHVGRTKSAKEC) are compositionally biased toward basic and acidic residues. Basic and acidic residues predominate over residues 719 to 730 (EQSETSELHEAH). Phosphoserine is present on residues S735 and S750. The residue at position 769 (K769) is an N6-acetyllysine. Basic and acidic residues-rich tracts occupy residues 778-804 (ADRM…RDVI), 812-868 (TKDR…REWE), and 875-889 (TPDR…HDQK). Disordered stretches follow at residues 778–899 (ADRM…TLKP) and 914–1510 (IITG…QETA). S885, S929, and S962 each carry phosphoserine. The segment covering 968–986 (STQSLLTSQSQKQSTPQPL) has biased composition (low complexity). The residue at position 991 (S991) is a Phosphoserine. Polar residues-rich tracts occupy residues 1026-1056 (PNTT…STRT), 1068-1086 (QPST…SQVT), and 1101-1113 (EIQS…QSVT). Position 1056 is a phosphothreonine (T1056). Residues S1104, S1126, and S1128 each carry the phosphoserine modification. A phosphothreonine mark is found at T1132, T1173, and T1234. Polar residues-rich tracts occupy residues 1225 to 1241 (PLTS…TSRA), 1265 to 1281 (PSTS…SSQA), 1295 to 1308 (VPTT…TSKK), and 1317 to 1326 (LVTQGRTYKP). Phosphothreonine is present on residues T1297 and T1298. S1327 carries the post-translational modification Phosphoserine. Over residues 1343–1363 (PSTSTDHLVTPKVTDQSLTLQ) the composition is skewed to polar residues. T1352 carries the phosphothreonine modification. S1359 carries the post-translational modification Phosphoserine. A compositionally biased stretch (low complexity) spans 1364-1376 (SSPLSASPVSSTP). Residue T1375 is modified to Phosphothreonine. The span at 1378–1393 (LKPPVPIAQPVTPEPI) shows a compositional bias: pro residues. K1418 is covalently cross-linked (Glycyl lysine isopeptide (Lys-Gly) (interchain with G-Cter in SUMO2)). Residues 1421 to 1441 (SALSEPEPQSSASQSSGASEA) are compositionally biased toward low complexity. A phosphoserine mark is found at S1435, S1436, S1439, and S1443. Positions 1459–1473 (VIKEEPVETEVKEEP) are enriched in basic and acidic residues. Residue K1461 forms a Glycyl lysine isopeptide (Lys-Gly) (interchain with G-Cter in SUMO1); alternate linkage. K1461 is covalently cross-linked (Glycyl lysine isopeptide (Lys-Gly) (interchain with G-Cter in SUMO2); alternate). T1480 is modified (phosphothreonine). Basic and acidic residues predominate over residues 1481–1493 (PEKRKRDHAEEVT). An N6-acetyllysine modification is found at K1496. 2 consecutive BRCT domains span residues 1510 to 1588 (APKV…DYLV) and 1609 to 1700 (RERR…FVLS).

In terms of assembly, homodimer. Interacts with H2AX, which requires phosphorylation of H2AX on 'Ser-139'. Interacts with the MRN complex, composed of MRE11, RAD50, and NBN. Interacts with CHEK2, which requires ATM-mediated phosphorylation of 'Thr-68' within the FHA domain of CHEK2. Interacts constitutively with the BRCA1-BARD1 complex, SMC1A and TP53BP1. Interacts with ATM and FANCD2, and these interactions are reduced upon DNA damage. Also interacts with the PRKDC complex, composed of XRCC6/KU70, XRCC5/KU80 and PRKDC/XRCC7. This interaction may be required for PRKDC autophosphorylation, which is essential for DNA double strand break (DSB) repair. When phosphorylated by ATM, interacts with RNF8 (via FHA domain). Interacts with CEP164. When phosphorylated, interacts with APTX (via FHA-like domain). Interacts (when phosphorylated) with TOPBP1; promoting TOPBP1 localization to DNA damage sites during mitosis. Interacts (when phosphorylated) with NBN; promoting NBN and MRN complex localization to DNA damage sites. Phosphorylated upon exposure to ionizing radiation (IR), ultraviolet radiation (UV), and hydroxyurea (HU). Phosphorylation in response to IR requires ATM, NBN, and possibly CHEK2. Also phosphorylated during the G2/M phase of the cell cycle and during activation of the mitotic spindle checkpoint. Phosphorylation at Thr-4 by ATM stabilizes and enhances homodimerization via the FHA domain. Phosphorylated at Ser-168 and Ser-198 by CK2 in response to DNA damage during mitosis, promoting interaction with TOPBP1. Phosphorylated by CK2 in response to DNA damage, promoting interaction with NBN and recruitment of the MRN complex to DNA damage sites. Post-translationally, sumoylation at Lys-1461 by PIAS4 following DNA damage promotes ubiquitin-mediated degradation. In terms of processing, ubiquitinated by RNF4, leading to proteasomal degradation; undergoes 'Lys-48'-linked polyubiquitination.

It localises to the nucleus. It is found in the chromosome. In terms of biological role, histone reader protein required for checkpoint-mediated cell cycle arrest in response to DNA damage within both the S phase and G2/M phases of the cell cycle. Specifically recognizes and binds histone H2AX phosphorylated at 'Ser-139', a marker of DNA damage, serving as a scaffold for the recruitment of DNA repair and signal transduction proteins to discrete foci of DNA damage sites. Also required for downstream events subsequent to the recruitment of these proteins. These include phosphorylation and activation of the ATM, CHEK1 and CHEK2 kinases, and stabilization of TP53/p53 and apoptosis. ATM and CHEK2 may also be activated independently by a parallel pathway mediated by TP53BP1. Required for chromosomal stability during mitosis by promoting recruitment of TOPBP1 to DNA double strand breaks (DSBs): TOPBP1 forms filamentous assemblies that bridge MDC1 and tether broken chromosomes during mitosis. Required for the repair of DSBs via homologous recombination by promoting recruitment of NBN component of the MRN complex to DSBs. The protein is Mediator of DNA damage checkpoint protein 1 (Mdc1) of Mus musculus (Mouse).